The following is a 207-amino-acid chain: MANYDVLKLDGTKSGSIELSDAVFGIEPNNSVLFEAINLQRASLRQGTHAVKNRSAVSGGGRKPWKQKGTGRARQGTIRAPQWRGGGIVFGPTPRSYAYKMPKKMRRLALRSALSFKVQENGLTVVDAFNFEAPKTKEFKNVLSTLEQPKKVLVVTENEDVNVELSARNIPGVQVTTAQGLNVLDITNADSLVITEAAAKKVEEVLG.

Residues 50 to 76 (AVKNRSAVSGGGRKPWKQKGTGRARQG) are disordered.

This sequence belongs to the universal ribosomal protein uL4 family. As to quaternary structure, part of the 50S ribosomal subunit.

One of the primary rRNA binding proteins, this protein initially binds near the 5'-end of the 23S rRNA. It is important during the early stages of 50S assembly. It makes multiple contacts with different domains of the 23S rRNA in the assembled 50S subunit and ribosome. Its function is as follows. Forms part of the polypeptide exit tunnel. This is Large ribosomal subunit protein uL4 from Staphylococcus aureus (strain MRSA252).